A 99-amino-acid polypeptide reads, in one-letter code: Aspartyl/glutamyl-tRNA(Asn/Gln) amidotransferase subunit C (99 aa).

This sequence belongs to the GatC family. In terms of assembly, heterotrimer of A, B and C subunits.

The catalysed reaction is L-glutamyl-tRNA(Gln) + L-glutamine + ATP + H2O = L-glutaminyl-tRNA(Gln) + L-glutamate + ADP + phosphate + H(+). It catalyses the reaction L-aspartyl-tRNA(Asn) + L-glutamine + ATP + H2O = L-asparaginyl-tRNA(Asn) + L-glutamate + ADP + phosphate + 2 H(+). In terms of biological role, allows the formation of correctly charged Asn-tRNA(Asn) or Gln-tRNA(Gln) through the transamidation of misacylated Asp-tRNA(Asn) or Glu-tRNA(Gln) in organisms which lack either or both of asparaginyl-tRNA or glutaminyl-tRNA synthetases. The reaction takes place in the presence of glutamine and ATP through an activated phospho-Asp-tRNA(Asn) or phospho-Glu-tRNA(Gln). This chain is Aspartyl/glutamyl-tRNA(Asn/Gln) amidotransferase subunit C, found in Paraburkholderia xenovorans (strain LB400).